Here is a 248-residue protein sequence, read N- to C-terminus: 2,3-bisphosphoglycerate-dependent phosphoglycerate mutase (248 aa).

Substrate is bound by residues 8–15, 21–22, R60, 87–90, K98, 114–115, and 183–184; these read RHGESTWN, TG, ERHY, RR, and GN. The active-site Tele-phosphohistidine intermediate is H9. E87 serves as the catalytic Proton donor/acceptor.

Belongs to the phosphoglycerate mutase family. BPG-dependent PGAM subfamily. As to quaternary structure, homodimer.

It carries out the reaction (2R)-2-phosphoglycerate = (2R)-3-phosphoglycerate. It functions in the pathway carbohydrate degradation; glycolysis; pyruvate from D-glyceraldehyde 3-phosphate: step 3/5. Catalyzes the interconversion of 2-phosphoglycerate and 3-phosphoglycerate. The polypeptide is 2,3-bisphosphoglycerate-dependent phosphoglycerate mutase (Paraburkholderia phymatum (strain DSM 17167 / CIP 108236 / LMG 21445 / STM815) (Burkholderia phymatum)).